Consider the following 1216-residue polypeptide: 1-phosphatidylinositol 4,5-bisphosphate phosphodiesterase beta-1 (1216 aa).

The S-palmitoyl cysteine moiety is linked to residue C17. S236 carries the post-translational modification Phosphoserine. The region spanning 316–467 (EDMSQPLSHY…LMYKILVKNK (152 aa)) is the PI-PLC X-box domain. Catalysis depends on residues H331 and H378. Residue S417 is modified to Phosphoserine. The segment at 469 to 534 (KSHKSSEGSG…MDEGTAGSEA (66 aa)) is disordered. The span at 472–483 (KSSEGSGKKKLS) shows a compositional bias: basic and acidic residues. Over residues 491 to 501 (SDSSSVFEPSS) the composition is skewed to low complexity. A compositionally biased stretch (acidic residues) spans 507–518 (ADTESDDDDDDD). T509 carries the post-translational modification Phosphothreonine. A phosphoserine mark is found at S511 and S582. The 117-residue stretch at 540 to 656 (MSNLVNYIQP…GYRLKPEFMR (117 aa)) folds into the PI-PLC Y-box domain. One can recognise a C2 domain in the interval 656–786 (RRPDKHFDPF…RNERNQPLTL (131 aa)). 4 disordered regions span residues 834–891 (DEEE…VKAP), 967–989 (EKSA…GSSA), 1072–1095 (MDKK…EEEK), and 1173–1216 (ISED…DTPL). Over residues 846-868 (ETSSEAPSETRTTPAENGVNHTA) the composition is skewed to polar residues. S887 carries the phosphoserine; by PKC modification. Basic and acidic residues predominate over residues 967–979 (EKSAKKDSKKKSE). Phosphoserine is present on residues S978 and S987. Over residues 1075 to 1095 (KRQEKITEAKSKDKSQMEEEK) the composition is skewed to basic and acidic residues. Phosphoserine is present on residues S1197, S1199, and S1200. Positions 1205 to 1216 (RENPGREFDTPL) are enriched in basic and acidic residues.

As to quaternary structure, interacts with DGKQ. Ca(2+) is required as a cofactor. Palmitoylated. Palmitoylation at Cys-17 by ZDHHC21 regulates the signaling activity of PLCB1 and the function of the endothelial barrier. Palmitoylation by ZDHHC21 is stimulated by inflammation.

The protein localises to the nucleus membrane. It localises to the cytoplasm. It catalyses the reaction a 1,2-diacyl-sn-glycero-3-phospho-(1D-myo-inositol-4,5-bisphosphate) + H2O = 1D-myo-inositol 1,4,5-trisphosphate + a 1,2-diacyl-sn-glycerol + H(+). The catalysed reaction is a 1,2-diacyl-sn-glycero-3-phospho-(1D-myo-inositol) + H2O = 1D-myo-inositol 1-phosphate + a 1,2-diacyl-sn-glycerol + H(+). Catalyzes the hydrolysis of 1-phosphatidylinositol 4,5-bisphosphate into diacylglycerol (DAG) and inositol 1,4,5-trisphosphate (IP3) and mediates intracellular signaling downstream of G protein-coupled receptors. Regulates the function of the endothelial barrier. The chain is 1-phosphatidylinositol 4,5-bisphosphate phosphodiesterase beta-1 from Mus musculus (Mouse).